A 225-amino-acid polypeptide reads, in one-letter code: Heptaprenylglyceryl phosphate synthase (225 aa).

Lys6 is a binding site for sn-glycerol 1-phosphate. 2 residues coordinate Mg(2+): Asp8 and Thr34. Sn-glycerol 1-phosphate contacts are provided by residues 153-158, Gly183, and 203-204; these read YVEYSG and GN.

It belongs to the GGGP/HepGP synthase family. Group I subfamily. In terms of assembly, homodimer. Mg(2+) is required as a cofactor.

The catalysed reaction is sn-glycerol 1-phosphate + all-trans-heptaprenyl diphosphate = 3-heptaprenyl-sn-glycero-1-phosphate + diphosphate. It participates in membrane lipid metabolism; glycerophospholipid metabolism. In terms of biological role, prenyltransferase that catalyzes in vivo the transfer of the heptaprenyl moiety of heptaprenyl pyrophosphate (HepPP; 35 carbon atoms) to the C3 hydroxyl of sn-glycerol-1-phosphate (G1P), producing heptaprenylglyceryl phosphate (HepGP). This reaction is an ether-bond-formation step in the biosynthesis of archaea-type G1P-based membrane lipids found in Bacillales. This Listeria monocytogenes serotype 4b (strain F2365) protein is Heptaprenylglyceryl phosphate synthase.